The following is a 103-amino-acid chain: Sperm-associated antigen 11B (103 aa).

The N-terminal stretch at M1–A25 is a signal peptide. N29 carries N-linked (GlcNAc...) asparagine glycosylation.

Belongs to the SPAG11 family. In terms of tissue distribution, specifically expressed in caput and proximal corpus of epididymis (at protein level). Present in the epididymal epithelium and on the sperm surface, with a subacrosomal equatorial distribution on the sperm head (at protein level).

It localises to the secreted. In terms of biological role, has antimicrobial activity against E.coli. Plays a role in the defense response in the male reproductive tract, contributing to sperm maturation, storage and protection. The polypeptide is Sperm-associated antigen 11B (Homo sapiens (Human)).